A 383-amino-acid polypeptide reads, in one-letter code: S-adenosylmethionine synthase (383 aa).

His-22 serves as a coordination point for ATP. Asp-24 lines the Mg(2+) pocket. Glu-50 contacts K(+). 2 residues coordinate L-methionine: Glu-63 and Gln-99. A flexible loop region spans residues 99–109; that stretch reads QSLEINQAVLK. Residues 160 to 162, Asp-235, 241 to 242, Ser-258, and Lys-262 each bind ATP; these read DMK and RK. Asp-235 contacts L-methionine. Lys-266 lines the L-methionine pocket.

Belongs to the AdoMet synthase family. Homotetramer; dimer of dimers. The cofactor is Mg(2+). Requires K(+) as cofactor.

Its subcellular location is the cytoplasm. It catalyses the reaction L-methionine + ATP + H2O = S-adenosyl-L-methionine + phosphate + diphosphate. It participates in amino-acid biosynthesis; S-adenosyl-L-methionine biosynthesis; S-adenosyl-L-methionine from L-methionine: step 1/1. In terms of biological role, catalyzes the formation of S-adenosylmethionine (AdoMet) from methionine and ATP. The overall synthetic reaction is composed of two sequential steps, AdoMet formation and the subsequent tripolyphosphate hydrolysis which occurs prior to release of AdoMet from the enzyme. In Mycoplasma genitalium (strain ATCC 33530 / DSM 19775 / NCTC 10195 / G37) (Mycoplasmoides genitalium), this protein is S-adenosylmethionine synthase.